The following is an 84-amino-acid chain: Acid stress protein IbaG (84 aa).

The protein belongs to the BolA/IbaG family.

Functionally, involved in cell resistance against acid stress. The sequence is that of Acid stress protein IbaG from Escherichia coli O6:H1 (strain CFT073 / ATCC 700928 / UPEC).